We begin with the raw amino-acid sequence, 456 residues long: Bifunctional protein GlmU (456 aa).

A pyrophosphorylase region spans residues 1 to 229 (MSSHAMSVVI…LSEVEGVNNR (229 aa)). UDP-N-acetyl-alpha-D-glucosamine contacts are provided by residues 11 to 14 (LAAG), lysine 25, glutamine 76, 81 to 82 (GT), 103 to 105 (YGD), glycine 140, glutamate 154, asparagine 169, and asparagine 227. Aspartate 105 serves as a coordination point for Mg(2+). Asparagine 227 contacts Mg(2+). Residues 230 to 250 (LQLARLEHVYQAEQAEKLLLA) form a linker region. Residues 251-456 (GVMLRDPARF…QGWRRPVKKK (206 aa)) are N-acetyltransferase. Arginine 333 and lysine 351 together coordinate UDP-N-acetyl-alpha-D-glucosamine. The active-site Proton acceptor is the histidine 363. 2 residues coordinate UDP-N-acetyl-alpha-D-glucosamine: tyrosine 366 and asparagine 377. Residues alanine 380, 386–387 (NY), serine 405, alanine 423, and arginine 440 each bind acetyl-CoA.

In the N-terminal section; belongs to the N-acetylglucosamine-1-phosphate uridyltransferase family. It in the C-terminal section; belongs to the transferase hexapeptide repeat family. In terms of assembly, homotrimer. Mg(2+) serves as cofactor.

The protein localises to the cytoplasm. It carries out the reaction alpha-D-glucosamine 1-phosphate + acetyl-CoA = N-acetyl-alpha-D-glucosamine 1-phosphate + CoA + H(+). The catalysed reaction is N-acetyl-alpha-D-glucosamine 1-phosphate + UTP + H(+) = UDP-N-acetyl-alpha-D-glucosamine + diphosphate. It functions in the pathway nucleotide-sugar biosynthesis; UDP-N-acetyl-alpha-D-glucosamine biosynthesis; N-acetyl-alpha-D-glucosamine 1-phosphate from alpha-D-glucosamine 6-phosphate (route II): step 2/2. It participates in nucleotide-sugar biosynthesis; UDP-N-acetyl-alpha-D-glucosamine biosynthesis; UDP-N-acetyl-alpha-D-glucosamine from N-acetyl-alpha-D-glucosamine 1-phosphate: step 1/1. The protein operates within bacterial outer membrane biogenesis; LPS lipid A biosynthesis. Functionally, catalyzes the last two sequential reactions in the de novo biosynthetic pathway for UDP-N-acetylglucosamine (UDP-GlcNAc). The C-terminal domain catalyzes the transfer of acetyl group from acetyl coenzyme A to glucosamine-1-phosphate (GlcN-1-P) to produce N-acetylglucosamine-1-phosphate (GlcNAc-1-P), which is converted into UDP-GlcNAc by the transfer of uridine 5-monophosphate (from uridine 5-triphosphate), a reaction catalyzed by the N-terminal domain. This Cronobacter sakazakii (strain ATCC BAA-894) (Enterobacter sakazakii) protein is Bifunctional protein GlmU.